The sequence spans 509 residues: Histidine--tRNA ligase, cytoplasmic (509 aa).

Ala-2 carries the N-acetylalanine modification. A WHEP-TRS domain is found at 3 to 59; sequence DRAALEELVRLQGAHVRGLKEQKASAEQIEEEVTKLLKLKAQLGQDEGKQKFVLKTP. Ser-66 carries the phosphoserine modification. L-histidine-binding positions include 130-132, Arg-157, Gln-173, Asp-177, Arg-326, and 330-331; these read DLT and YY. At Ser-356 the chain carries Phosphoserine.

Belongs to the class-II aminoacyl-tRNA synthetase family. In terms of assembly, homodimer.

Its subcellular location is the cytoplasm. The enzyme catalyses tRNA(His) + L-histidine + ATP = L-histidyl-tRNA(His) + AMP + diphosphate + H(+). Catalyzes the ATP-dependent ligation of histidine to the 3'-end of its cognate tRNA, via the formation of an aminoacyl-adenylate intermediate (His-AMP). Plays a role in axon guidance. In Mus musculus (Mouse), this protein is Histidine--tRNA ligase, cytoplasmic (Hars1).